Reading from the N-terminus, the 137-residue chain is Methylglyoxal synthase (137 aa).

An MGS-like domain is found at 1-137 (MNIALVAHDK…KLSHNDEPPA (137 aa)). Substrate is bound by residues His8, Lys12, 34 to 37 (TGTT), and 54 to 55 (SG). Residue Asp60 is the Proton donor/acceptor of the active site. His87 lines the substrate pocket.

The protein belongs to the methylglyoxal synthase family.

The catalysed reaction is dihydroxyacetone phosphate = methylglyoxal + phosphate. In terms of biological role, catalyzes the formation of methylglyoxal from dihydroxyacetone phosphate. The sequence is that of Methylglyoxal synthase from Exiguobacterium sp. (strain ATCC BAA-1283 / AT1b).